We begin with the raw amino-acid sequence, 173 residues long: Large ribosomal subunit protein uL10 (173 aa).

It belongs to the universal ribosomal protein uL10 family. In terms of assembly, part of the ribosomal stalk of the 50S ribosomal subunit. The N-terminus interacts with L11 and the large rRNA to form the base of the stalk. The C-terminus forms an elongated spine to which L12 dimers bind in a sequential fashion forming a multimeric L10(L12)X complex.

In terms of biological role, forms part of the ribosomal stalk, playing a central role in the interaction of the ribosome with GTP-bound translation factors. This chain is Large ribosomal subunit protein uL10, found in Cupriavidus metallidurans (strain ATCC 43123 / DSM 2839 / NBRC 102507 / CH34) (Ralstonia metallidurans).